The following is a 559-amino-acid chain: Mercuric reductase (559 aa).

Residues 1 to 64 (MYLNITGMTC…AVAGLGYKAT (64 aa)) enclose the HMA domain. The a metal cation site is built by Cys-10 and Cys-13. Residues Ala-108, Gly-128, and Thr-133 each coordinate FAD. A disulfide bridge connects residues Cys-134 and Cys-139. FAD is bound by residues Lys-143, Ala-209, Asp-401, and Val-409. Residues Cys-556 and Cys-557 each contribute to the Hg(2+) site.

It belongs to the class-I pyridine nucleotide-disulfide oxidoreductase family. As to quaternary structure, homodimer. FAD is required as a cofactor.

The enzyme catalyses Hg + NADP(+) + H(+) = Hg(2+) + NADPH. In terms of biological role, resistance to Hg(2+) in bacteria appears to be governed by a specialized system which includes mercuric reductase. MerA protein is responsible for volatilizing mercury as Hg(0). In Alcaligenes sp, this protein is Mercuric reductase (merA).